The sequence spans 525 residues: Tigger transposable element-derived protein 2 (525 aa).

The region spanning 1–52 (MLGKRKRVVLTIKDKLDIIKKLEEGISFKKLSVVYGIGESTVRDIKKNKERI) is the HTH psq-type domain. 2 DNA-binding regions (H-T-H motif) span residues 28-48 (FKKLSVVYGIGESTVRDIKKN) and 100-132 (TICAKQAKFFFDALGMEGDFNASSGWLTRFKQR). The HTH CENPB-type domain maps to 67–139 (KRKSMKSSTY…KQRHGIPKAA (73 aa)). In terms of domain architecture, DDE-1 spans 168–385 (LQPEQIYGAD…VKSSTITKAW (218 aa)). The tract at residues 442 to 474 (QVLTDSESAEDQTKAAEQKPSSKSRKTELNPEK) is disordered.

This sequence belongs to the tigger transposable element derived protein family.

It localises to the nucleus. This chain is Tigger transposable element-derived protein 2 (TIGD2), found in Homo sapiens (Human).